The sequence spans 82 residues: Small ribosomal subunit protein uS17 (82 aa).

Belongs to the universal ribosomal protein uS17 family. In terms of assembly, part of the 30S ribosomal subunit.

Its function is as follows. One of the primary rRNA binding proteins, it binds specifically to the 5'-end of 16S ribosomal RNA. This Azorhizobium caulinodans (strain ATCC 43989 / DSM 5975 / JCM 20966 / LMG 6465 / NBRC 14845 / NCIMB 13405 / ORS 571) protein is Small ribosomal subunit protein uS17.